Consider the following 255-residue polypeptide: 2,3-dehydroadipyl-CoA hydratase (255 aa).

It belongs to the enoyl-CoA hydratase/isomerase family.

It carries out the reaction a (3S)-3-hydroxyacyl-CoA = a (2E)-enoyl-CoA + H2O. The catalysed reaction is a 4-saturated-(3S)-3-hydroxyacyl-CoA = a (3E)-enoyl-CoA + H2O. Its pathway is aromatic compound metabolism; phenylacetate degradation. Catalyzes the reversible conversion of enzymatically produced 2,3-dehydroadipyl-CoA into 3-hydroxyadipyl-CoA. This is 2,3-dehydroadipyl-CoA hydratase (paaF) from Escherichia coli (strain K12).